A 234-amino-acid polypeptide reads, in one-letter code: Adenylate dimethylallyltransferase (234 aa).

Belongs to the isopentenyl transferase family.

It catalyses the reaction dimethylallyl diphosphate + AMP = N(6)-(dimethylallyl)adenosine 5'-phosphate + diphosphate. Its function is as follows. Transfers dimethylallyl groups to AMP as part of the biosynthesis of cytokinin phytohormones. The sequence is that of Adenylate dimethylallyltransferase (ptz) from Pseudomonas savastanoi (Pseudomonas syringae pv. savastanoi).